Here is a 93-residue protein sequence, read N- to C-terminus: YcgL domain-containing protein Swoo_2115 (93 aa).

The 85-residue stretch at 1–85 (MICAVYKSRR…PVVNLLEEHK (85 aa)) folds into the YcgL domain.

The sequence is that of YcgL domain-containing protein Swoo_2115 from Shewanella woodyi (strain ATCC 51908 / MS32).